The following is a 611-amino-acid chain: Leukotriene A-4 hydrolase (611 aa).

N6-acetyllysine is present on lysine 73. A peptide is bound by residues 135–137 (QCQ) and 267–272 (PYGGME). Residue histidine 296 participates in Zn(2+) binding. Glutamate 297 functions as the Proton acceptor in the catalytic mechanism. Zn(2+) contacts are provided by histidine 300 and glutamate 319. Position 337 is an N6-acetyllysine (lysine 337). Tyrosine 384 (proton donor) is an active-site residue. Position 414 is an N6-acetyllysine (lysine 414). Serine 416 is modified (phosphoserine). Position 564-566 (564-566 (RMK)) interacts with a peptide. Position 573 is an N6-acetyllysine (lysine 573).

This sequence belongs to the peptidase M1 family. Monomer. It depends on Zn(2+) as a cofactor. Phosphorylation at Ser-416 inhibits leukotriene-A4 hydrolase activity.

The protein localises to the cytoplasm. It catalyses the reaction leukotriene A4 + H2O = leukotriene B4. The catalysed reaction is (5S,6S)-epoxy-(18R)-hydroxy-(7E,9E,11Z,14Z,16E)-eicosapentaenoate + H2O = resolvin E1. The enzyme catalyses (5S,6S)-epoxy-(18S)-hydroxy-(7E,9E,11Z,14Z,16E)-eicosapentaenoate + H2O = 18S-resolvin E1. It carries out the reaction Release of the N-terminal residue from a tripeptide.. It functions in the pathway lipid metabolism; leukotriene B4 biosynthesis. Inhibited by bestatin. The epoxide hydrolase activity is restrained by suicide inactivation that involves binding of LTA4 to Tyr-379. 4-(4-benzylphenyl)thiazol-2-amine (ARM1) selectively inhibits the epoxide hydrolase activity. In terms of biological role, bifunctional zinc metalloenzyme that comprises both epoxide hydrolase (EH) and aminopeptidase activities. Acts as an epoxide hydrolase to catalyze the conversion of LTA4 to the pro-inflammatory mediator leukotriene B4 (LTB4). Also has aminopeptidase activity, with high affinity for N-terminal arginines of various synthetic tripeptides. In addition to its pro-inflammatory EH activity, may also counteract inflammation by its aminopeptidase activity, which inactivates by cleavage another neutrophil attractant, the tripeptide Pro-Gly-Pro (PGP), a bioactive fragment of collagen generated by the action of matrix metalloproteinase-9 (MMP9) and prolylendopeptidase (PREPL). Involved also in the biosynthesis of resolvin E1 and 18S-resolvin E1 from eicosapentaenoic acid, two lipid mediators that show potent anti-inflammatory and pro-resolving actions. This Mus musculus (Mouse) protein is Leukotriene A-4 hydrolase (Lta4h).